The chain runs to 144 residues: Deoxyuridine 5'-triphosphate nucleotidohydrolase (144 aa).

Residues 63–65 (RSG), asparagine 76, and 80–82 (TID) each bind substrate.

It belongs to the dUTPase family. Requires Mg(2+) as cofactor.

It carries out the reaction dUTP + H2O = dUMP + diphosphate + H(+). It functions in the pathway pyrimidine metabolism; dUMP biosynthesis; dUMP from dCTP (dUTP route): step 2/2. Functionally, this enzyme is involved in nucleotide metabolism: it produces dUMP, the immediate precursor of thymidine nucleotides and it decreases the intracellular concentration of dUTP so that uracil cannot be incorporated into DNA. This chain is Deoxyuridine 5'-triphosphate nucleotidohydrolase, found in Phocaeicola vulgatus (strain ATCC 8482 / DSM 1447 / JCM 5826 / CCUG 4940 / NBRC 14291 / NCTC 11154) (Bacteroides vulgatus).